Reading from the N-terminus, the 389-residue chain is Succinate--CoA ligase [ADP-forming] subunit beta (389 aa).

In terms of domain architecture, ATP-grasp spans 9 to 244 (KQILRKYGIP…PSQMSNNEAR (236 aa)). Residues Lys46, 53–55 (GRG), Ile102, and Glu107 each bind ATP. The Mg(2+) site is built by Asn199 and Asp213. Substrate contacts are provided by residues Asn264 and 321 to 323 (GIM).

This sequence belongs to the succinate/malate CoA ligase beta subunit family. In terms of assembly, heterotetramer of two alpha and two beta subunits. Mg(2+) is required as a cofactor.

It catalyses the reaction succinate + ATP + CoA = succinyl-CoA + ADP + phosphate. The enzyme catalyses GTP + succinate + CoA = succinyl-CoA + GDP + phosphate. The protein operates within carbohydrate metabolism; tricarboxylic acid cycle; succinate from succinyl-CoA (ligase route): step 1/1. Succinyl-CoA synthetase functions in the citric acid cycle (TCA), coupling the hydrolysis of succinyl-CoA to the synthesis of either ATP or GTP and thus represents the only step of substrate-level phosphorylation in the TCA. The beta subunit provides nucleotide specificity of the enzyme and binds the substrate succinate, while the binding sites for coenzyme A and phosphate are found in the alpha subunit. This Protochlamydia amoebophila (strain UWE25) protein is Succinate--CoA ligase [ADP-forming] subunit beta.